A 352-amino-acid polypeptide reads, in one-letter code: B1 bradykinin receptor (352 aa).

Over 1-41 the chain is Extracellular; sequence MASWPPLELQSSNQSQLFPQNATACDNAPEAWDLLHRVLPT. Residues Asn-13 and Asn-21 are each glycosylated (N-linked (GlcNAc...) asparagine). Residues 42–62 form a helical membrane-spanning segment; the sequence is FIISICSFGLLGNLFVLLVFL. Residues 63 to 72 are Cytoplasmic-facing; it reads LPRRRLNVAE. Residues 73 to 93 traverse the membrane as a helical segment; sequence IYLANLAASDLVFVLGLPFWA. Topologically, residues 94–110 are extracellular; sequence ENIWNQFNWPFGALLCR. A disulfide bond links Cys-109 and Cys-188. Residues 111–131 form a helical membrane-spanning segment; sequence GINGVIKANLFISIFLVVAIS. At 132-153 the chain is on the cytoplasmic side; sequence QDRYCLLVHPMASRRRQRRRQA. A helical membrane pass occupies residues 154 to 174; sequence RVTCVLIWVVGGLLSIPTFLL. At 175-206 the chain is on the extracellular side; that stretch reads RSIQAVPDLNITACILLLPHEAWHFARIVELN. Residue Asn-184 is glycosylated (N-linked (GlcNAc...) asparagine). Residues 207-227 form a helical membrane-spanning segment; sequence ILAFLLPLAAIVFFNYHILAS. Over 228–250 the chain is Cytoplasmic; that stretch reads LRGREEVSRTRCGGRKDSKTTAL. A helical membrane pass occupies residues 251-271; the sequence is ILTLVVAFLVCWAPYHFFAFL. Topologically, residues 272 to 294 are extracellular; that stretch reads EFLFQVQAIRSCFWEDFIDLGLQ. A helical transmembrane segment spans residues 295–315; that stretch reads LANFLAFTNSSLNPVIYVFVG. Over 316–352 the chain is Cytoplasmic; it reads RLFRTKVWELYKQCTPKSLAPISSSHRKEIFQLFWRN. Residue Cys-329 is the site of S-palmitoyl cysteine attachment.

Belongs to the G-protein coupled receptor 1 family. Bradykinin receptor subfamily. BDKRB1 sub-subfamily.

It localises to the cell membrane. Functionally, this is a receptor for bradykinin. Could be a factor in chronic pain and inflammation. This is B1 bradykinin receptor (BDKRB1) from Chlorocebus pygerythrus (Vervet monkey).